The following is a 258-amino-acid chain: Trans-aconitate 2-methyltransferase (258 aa).

It belongs to the methyltransferase superfamily. Tam family.

It localises to the cytoplasm. The catalysed reaction is trans-aconitate + S-adenosyl-L-methionine = (E)-3-(methoxycarbonyl)pent-2-enedioate + S-adenosyl-L-homocysteine. In terms of biological role, catalyzes the S-adenosylmethionine monomethyl esterification of trans-aconitate. The polypeptide is Trans-aconitate 2-methyltransferase (Methylobacterium nodulans (strain LMG 21967 / CNCM I-2342 / ORS 2060)).